The primary structure comprises 148 residues: Aspartate 1-decarboxylase (148 aa).

Ser-25 serves as the catalytic Schiff-base intermediate with substrate; via pyruvic acid. Position 25 is a pyruvic acid (Ser) (Ser-25). A substrate-binding site is contributed by Thr-57. Tyr-58 acts as the Proton donor in catalysis. 73-75 (GAA) contacts substrate.

It belongs to the PanD family. As to quaternary structure, heterooctamer of four alpha and four beta subunits. Pyruvate is required as a cofactor. Post-translationally, is synthesized initially as an inactive proenzyme, which is activated by self-cleavage at a specific serine bond to produce a beta-subunit with a hydroxyl group at its C-terminus and an alpha-subunit with a pyruvoyl group at its N-terminus.

The protein resides in the cytoplasm. The catalysed reaction is L-aspartate + H(+) = beta-alanine + CO2. It functions in the pathway cofactor biosynthesis; (R)-pantothenate biosynthesis; beta-alanine from L-aspartate: step 1/1. In terms of biological role, catalyzes the pyruvoyl-dependent decarboxylation of aspartate to produce beta-alanine. The polypeptide is Aspartate 1-decarboxylase (Rhodococcus opacus (strain B4)).